We begin with the raw amino-acid sequence, 132 residues long: Phosphoribosyl-AMP cyclohydrolase (132 aa).

A Mg(2+)-binding site is contributed by Asp85. Position 86 (Cys86) interacts with Zn(2+). Residues Asp87 and Asp89 each coordinate Mg(2+). Positions 102 and 109 each coordinate Zn(2+).

Belongs to the PRA-CH family. As to quaternary structure, homodimer. Mg(2+) is required as a cofactor. Zn(2+) serves as cofactor.

The protein localises to the cytoplasm. It carries out the reaction 1-(5-phospho-beta-D-ribosyl)-5'-AMP + H2O = 1-(5-phospho-beta-D-ribosyl)-5-[(5-phospho-beta-D-ribosylamino)methylideneamino]imidazole-4-carboxamide. It functions in the pathway amino-acid biosynthesis; L-histidine biosynthesis; L-histidine from 5-phospho-alpha-D-ribose 1-diphosphate: step 3/9. In terms of biological role, catalyzes the hydrolysis of the adenine ring of phosphoribosyl-AMP. This is Phosphoribosyl-AMP cyclohydrolase from Frankia alni (strain DSM 45986 / CECT 9034 / ACN14a).